We begin with the raw amino-acid sequence, 178 residues long: Large ribosomal subunit protein eL20w (178 aa).

Belongs to the eukaryotic ribosomal protein eL20 family.

This chain is Large ribosomal subunit protein eL20w (RPL18AD), found in Arabidopsis thaliana (Mouse-ear cress).